The sequence spans 194 residues: MSSINITESAQEHFAKLLAQQPEGTNIRVFVVNPGTQNAECGVSYCPPEAVEANDTELKFEKLSAYVDELSLPFLEDADIDYVTDKMGSQLTLKAPNAKMRKVADDAPLFERVEYAIQTQVNPQLAGHGGHVSLMEINDEGVAIVQFGGGCNGCSMVDVTLKEGIEKELLVQFEGELTAVKDLTEHDRGEHSYY.

[4Fe-4S] cluster contacts are provided by Cys151 and Cys154.

The protein belongs to the NfuA family. In terms of assembly, homodimer. The cofactor is [4Fe-4S] cluster.

Involved in iron-sulfur cluster biogenesis. Binds a 4Fe-4S cluster, can transfer this cluster to apoproteins, and thereby intervenes in the maturation of Fe/S proteins. Could also act as a scaffold/chaperone for damaged Fe/S proteins. This is Fe/S biogenesis protein NfuA from Aliivibrio fischeri (strain ATCC 700601 / ES114) (Vibrio fischeri).